The chain runs to 476 residues: Cytosolic iron-sulfur assembly component 3 (476 aa).

Residue Ala-2 is modified to N-acetylalanine. Positions 24, 71, 74, 77, 190, 246, 395, and 399 each coordinate [4Fe-4S] cluster.

This sequence belongs to the NARF family. In terms of assembly, external component of the CIA complex. In the CIA complex, interacts directly with CIAO1 and MMS19.

Component of the cytosolic iron-sulfur protein assembly (CIA) complex, a multiprotein complex that mediates the incorporation of iron-sulfur cluster into extramitochondrial Fe/S proteins. Seems to negatively regulate the level of HIF1A expression, although this effect could be indirect. This is Cytosolic iron-sulfur assembly component 3 from Pongo abelii (Sumatran orangutan).